A 393-amino-acid polypeptide reads, in one-letter code: Riboflavin biosynthesis protein RibBA (393 aa).

Residues 1-200 (MEFDEIKDAL…IESLVNYQKD (200 aa)) are DHBP synthase. D-ribulose 5-phosphate-binding positions include 27–28 (RE), Asp32, 139–143 (RTGHT), and Glu163. Glu28 contributes to the Mg(2+) binding site. His142 is a binding site for Mg(2+). Positions 201 to 393 (KDTSVELKAK…TKKIKMGHLI (193 aa)) are GTP cyclohydrolase II. 249-253 (RIHSA) is a GTP binding site. The Zn(2+) site is built by Cys254, Cys265, and Cys267. GTP contacts are provided by residues Gln270, 291–293 (EGR), and Thr313. Asp325 (proton acceptor; for GTP cyclohydrolase activity) is an active-site residue. Arg327 acts as the Nucleophile; for GTP cyclohydrolase activity in catalysis. Residues Ser348 and Lys353 each coordinate GTP.

It in the N-terminal section; belongs to the DHBP synthase family. This sequence in the C-terminal section; belongs to the GTP cyclohydrolase II family. Mg(2+) is required as a cofactor. The cofactor is Mn(2+). It depends on Zn(2+) as a cofactor.

The catalysed reaction is D-ribulose 5-phosphate = (2S)-2-hydroxy-3-oxobutyl phosphate + formate + H(+). It carries out the reaction GTP + 4 H2O = 2,5-diamino-6-hydroxy-4-(5-phosphoribosylamino)-pyrimidine + formate + 2 phosphate + 3 H(+). The protein operates within cofactor biosynthesis; riboflavin biosynthesis; 2-hydroxy-3-oxobutyl phosphate from D-ribulose 5-phosphate: step 1/1. It participates in cofactor biosynthesis; riboflavin biosynthesis; 5-amino-6-(D-ribitylamino)uracil from GTP: step 1/4. Its function is as follows. Catalyzes the conversion of D-ribulose 5-phosphate to formate and 3,4-dihydroxy-2-butanone 4-phosphate. In terms of biological role, catalyzes the conversion of GTP to 2,5-diamino-6-ribosylamino-4(3H)-pyrimidinone 5'-phosphate (DARP), formate and pyrophosphate. This is Riboflavin biosynthesis protein RibBA from Staphylococcus haemolyticus (strain JCSC1435).